The chain runs to 453 residues: MEKALELDGEYPESLRDEFNIPTFKSMGLSSDDKPVTYLCGNSLGLMPKSTRNSINAELDAWSDCAVESHFKHPEEARGKVPWVSIDLPILPLLAPIVGAQENEVAVMNSLTANLNSLLITFYKPTEKRFKILFEKGSFPSDYYAFYNQCKIHGISEPENVFIQIEPREGETYIRTQDILDTIEVNQDELALVCLSGVQYYTGQYFDIGRITSFAHQFPDILVGWDLAHAVGNVPLQLHDWGVDFACWCSYKYLNAGPGGIGGLFVHSKHTKPDPAKESLPRLAGWWGNDPAKRFQMLEVFEPIPGALGFRQSNPSVIDTVALRSSLELFAKFNGINEVRKRSLLLTNYMTELLEASKYYKHPLRIEKLPCFFTILTPTSTDEEHGAQLSLYFDSDTGKEDIMPKVFQYLHDHGVIGDARRPNVIRLAPAPLYNTFSDVYIAVNALNEAMDKL.

Pyridoxal 5'-phosphate-binding positions include L111, T112, F139 to D142, S196, D226, H229, and Y251. Residue K252 is modified to N6-(pyridoxal phosphate)lysine. Pyridoxal 5'-phosphate-binding residues include W286 and N314.

It belongs to the kynureninase family. As to quaternary structure, homodimer. Pyridoxal 5'-phosphate serves as cofactor.

The protein localises to the cytoplasm. It localises to the nucleus. The enzyme catalyses L-kynurenine + H2O = anthranilate + L-alanine + H(+). It carries out the reaction 3-hydroxy-L-kynurenine + H2O = 3-hydroxyanthranilate + L-alanine + H(+). It participates in amino-acid degradation; L-kynurenine degradation; L-alanine and anthranilate from L-kynurenine: step 1/1. The protein operates within cofactor biosynthesis; NAD(+) biosynthesis; quinolinate from L-kynurenine: step 2/3. Functionally, catalyzes the cleavage of L-kynurenine (L-Kyn) and L-3-hydroxykynurenine (L-3OHKyn) into anthranilic acid (AA) and 3-hydroxyanthranilic acid (3-OHAA), respectively. The polypeptide is Kynureninase (Saccharomyces cerevisiae (strain ATCC 204508 / S288c) (Baker's yeast)).